The primary structure comprises 198 residues: tRNA (pseudouridine(54)-N(1))-methyltransferase (198 aa).

S-adenosyl-L-methionine contacts are provided by residues leucine 130, glycine 153, 176–181 (LSPLEL), and cysteine 186.

Belongs to the methyltransferase superfamily. TrmY family. In terms of assembly, homodimer.

The protein resides in the cytoplasm. It catalyses the reaction pseudouridine(54) in tRNA + S-adenosyl-L-methionine = N(1)-methylpseudouridine(54) in tRNA + S-adenosyl-L-homocysteine + H(+). Its function is as follows. Specifically catalyzes the N1-methylation of pseudouridine at position 54 (Psi54) in tRNAs. The polypeptide is tRNA (pseudouridine(54)-N(1))-methyltransferase (Methanococcus vannielii (strain ATCC 35089 / DSM 1224 / JCM 13029 / OCM 148 / SB)).